We begin with the raw amino-acid sequence, 322 residues long: NADH-quinone oxidoreductase subunit H (322 aa).

8 consecutive transmembrane segments (helical) span residues 12–32 (VGKALIVLVGIVGAGAFMSFI), 79–99 (IFILAPIIAFTAFILAFAVVP), 111–131 (VGLLYILAIAGLAVYAVLFAG), 151–171 (LSYEVFLGLSLMGIVIQTGSF), 183–203 (LWNVVPQILGFITFLFAGVAV), 234–254 (FFVGEYIGIVLISSLIVTLFF), 262–282 (LPPFIWFALKTACFMVFFILL), and 301–321 (VCLPLTLVNMLITGAVVLINV).

This sequence belongs to the complex I subunit 1 family. As to quaternary structure, NDH-1 is composed of 14 different subunits. Subunits NuoA, H, J, K, L, M, N constitute the membrane sector of the complex.

The protein localises to the cell inner membrane. It catalyses the reaction a quinone + NADH + 5 H(+)(in) = a quinol + NAD(+) + 4 H(+)(out). Functionally, NDH-1 shuttles electrons from NADH, via FMN and iron-sulfur (Fe-S) centers, to quinones in the respiratory chain. The immediate electron acceptor for the enzyme in this species is believed to be ubiquinone. Couples the redox reaction to proton translocation (for every two electrons transferred, four hydrogen ions are translocated across the cytoplasmic membrane), and thus conserves the redox energy in a proton gradient. This subunit may bind ubiquinone. This Aeromonas salmonicida (strain A449) protein is NADH-quinone oxidoreductase subunit H.